We begin with the raw amino-acid sequence, 959 residues long: DEAD-box ATP-dependent RNA helicase rde-12 (959 aa).

The tract at residues 1 to 336 (MSSFGNNAGG…EGVNAPVRAP (336 aa)) is disordered. Basic and acidic residues predominate over residues 71-97 (GRREDDRSHSRDNHGGSRYGERDDRGN). The span at 98–118 (NGRSADNRYSQSNYNYDSNRG) shows a compositional bias: polar residues. The span at 122–134 (YQRDNHGSKDDRG) shows a compositional bias: basic and acidic residues. Over residues 137-160 (NQYNDHGSNHNSNSRNDQYRQGSY) the composition is skewed to polar residues. Composition is skewed to basic and acidic residues over residues 166–181 (SGYR…DNDQ) and 189–201 (RDSD…DHHN). Residues 202-213 (YNSQSSPRSHQG) are compositionally biased toward polar residues. Composition is skewed to basic and acidic residues over residues 219-239 (SAPK…HDSY) and 255-270 (YRND…DHRS). The segment covering 271–280 (GGNNSSSGFK) has biased composition (low complexity). Positions 281-301 (NDGGFGGNDNRGFGNNGGGSF) are enriched in gly residues. A compositionally biased stretch (low complexity) spans 302 to 317 (GNPNNSYRGNSNNIGG). Positions 380-408 (TSWTNSGLHPTILETLKRIKYNNVRTIQG) match the Q motif motif. The region spanning 411 to 599 (IPQVLDGHDV…NELMKRLPGQ (189 aa)) is the Helicase ATP-binding domain. 424–431 (AETSAGKT) contributes to the ATP binding site. Residues 539-542 (DEAD) carry the DEAD box motif. Residues 632–792 (KLREILKQNV…KVPDFLDAMA (161 aa)) enclose the Helicase C-terminal domain. Disordered stretches follow at residues 793 to 834 (KSSR…GGGR) and 858 to 959 (GGGG…DDEW). Composition is skewed to gly residues over residues 800–834 (GTSG…GGGR) and 858–872 (GGGG…GFGG). A compositionally biased stretch (polar residues) spans 930-941 (TLGSSTFGTANN). A compositionally biased stretch (acidic residues) spans 942 to 959 (ADEEPTETGADGNDDDEW).

The protein belongs to the DEAD box helicase family. DDX3/DED1 subfamily. As to quaternary structure, interacts with wago-1, ergo-1 and rde-1. Mg(2+) serves as cofactor. In terms of tissue distribution, expressed in the soma and germline.

Its subcellular location is the cytoplasm. The protein localises to the perinuclear region. It localises to the cytoplasmic granule. It is found in the P-body. It catalyses the reaction ATP + H2O = ADP + phosphate + H(+). Its function is as follows. Probable ATP-dependent RNA helicase involved in RNAi-mediated gene silencing. Specifically required in the endogenous siRNA pathway for biogenesis of secondary endogenous small interfering RNA (siRNA) intermediates called 22G-RNAs. May associate with and recruit rde-10 to primary siRNA-targeted mRNA for secondary siRNA synthesis. May be recruited to target mRNAs by rde-1 and/or ergo-1. The sequence is that of DEAD-box ATP-dependent RNA helicase rde-12 from Caenorhabditis elegans.